Reading from the N-terminus, the 465-residue chain is Endo-1,3-1,4-beta-glycanase EglC (465 aa).

Hemolysin-type calcium-binding repeat units follow at residues 33-50 (YGTA…VDVT), 105-122 (FGNS…SQTI), and 123-140 (NGGA…ADTF). Residues 213–462 (LDRSVLTQTF…YVKAYSLDAD (250 aa)) enclose the GH16 domain. E349 functions as the Nucleophile in the catalytic mechanism. E354 serves as the catalytic Proton donor.

The protein belongs to the glycosyl hydrolase 16 family.

It localises to the secreted. It functions in the pathway glycan metabolism; exopolysaccharide biosynthesis. Functionally, cleaves high molecular weight succinoglycan to yield LMW succinoglycan. Dynamically regulates the molecular weight distribution of succinoglycan by cleaving nascent succinoglycan only during a limited period after its synthesis, perhaps before it undergoes a time-dependent change in its conformation or aggregation state. The chain is Endo-1,3-1,4-beta-glycanase EglC (eglC) from Rhizobium meliloti (strain 1021) (Ensifer meliloti).